The sequence spans 207 residues: Dephospho-CoA kinase (207 aa).

Residues 12–207 enclose the DPCK domain; that stretch reads LIGITGMIGG…LYSTLLGKML (196 aa). 20 to 25 is an ATP binding site; that stretch reads GGGKST.

It belongs to the CoaE family.

Its subcellular location is the cytoplasm. The enzyme catalyses 3'-dephospho-CoA + ATP = ADP + CoA + H(+). Its pathway is cofactor biosynthesis; coenzyme A biosynthesis; CoA from (R)-pantothenate: step 5/5. Catalyzes the phosphorylation of the 3'-hydroxyl group of dephosphocoenzyme A to form coenzyme A. The protein is Dephospho-CoA kinase of Leptospira interrogans serogroup Icterohaemorrhagiae serovar Lai (strain 56601).